Consider the following 81-residue polypeptide: uncharacterized protein (81 aa).

In terms of tissue distribution, expressed in fetal brain.

This is an uncharacterized protein from Homo sapiens (Human).